A 1177-amino-acid chain; its full sequence is Phospholipid-transporting ATPase IF (1177 aa).

Over M1–V55 the chain is Cytoplasmic. Residues P56 to V77 traverse the membrane as a helical segment. Topologically, residues Q78 to D82 are extracellular. Residues T83 to K104 traverse the membrane as a helical segment. At Q105–F289 the chain is on the cytoplasmic side. Residues L290–W311 form a helical membrane-spanning segment. Over Q312–D341 the chain is Extracellular. Residues F342–V359 form a helical membrane-spanning segment. The Cytoplasmic portion of the chain corresponds to T360 to A876. D407 functions as the 4-aspartylphosphate intermediate in the catalytic mechanism. ATP is bound by residues D407, K408, T409, E531, F572, K595, R626, T706, G707, D708, R794, and K800. A Mg(2+)-binding site is contributed by D407. T409 is a Mg(2+) binding site. Position 821 (D821) interacts with Mg(2+). ATP contacts are provided by N824 and D825. Residue D825 coordinates Mg(2+). Residues T877 to F898 traverse the membrane as a helical segment. Over Y899–S910 the chain is Extracellular. Residues V911–L930 form a helical membrane-spanning segment. Over L931–T960 the chain is Cytoplasmic. Residues F961 to L982 traverse the membrane as a helical segment. The Extracellular segment spans residues I983–G997. Residues N998–E1020 traverse the membrane as a helical segment. Residues T1021–T1025 are Cytoplasmic-facing. A helical membrane pass occupies residues W1026–G1047. At G1048 to Q1065 the chain is on the extracellular side. Residues L1066–K1090 form a helical membrane-spanning segment. At K1091–C1177 the chain is on the cytoplasmic side. The residue at position 1154 (S1154) is a Phosphoserine.

Belongs to the cation transport ATPase (P-type) (TC 3.A.3) family. Type IV subfamily. As to quaternary structure, component of a P4-ATPase flippase complex which consists of a catalytic alpha subunit ATP11B and an accessory beta subunit TMEM30A. Mg(2+) is required as a cofactor.

The protein localises to the recycling endosome membrane. Its subcellular location is the early endosome. It is found in the endoplasmic reticulum. The protein resides in the golgi apparatus. It localises to the trans-Golgi network. It carries out the reaction ATP + H2O + phospholipidSide 1 = ADP + phosphate + phospholipidSide 2.. It catalyses the reaction a 1,2-diacyl-sn-glycero-3-phospho-L-serine(out) + ATP + H2O = a 1,2-diacyl-sn-glycero-3-phospho-L-serine(in) + ADP + phosphate + H(+). The catalysed reaction is a 1,2-diacyl-sn-glycero-3-phosphoethanolamine(out) + ATP + H2O = a 1,2-diacyl-sn-glycero-3-phosphoethanolamine(in) + ADP + phosphate + H(+). Its activity is regulated as follows. The ATPase activity is up-regulated by aminophospholipids PS and PE. Functionally, catalytic component of a P4-ATPase flippase complex which catalyzes the hydrolysis of ATP coupled to the transport of aminophospholipids, phosphatidylserines (PS) and phosphatidylethanolamines (PE), from the outer to the inner leaflet of intracellular membranes. May contribute to the maintenance of membrane lipid asymmetry in endosome compartment. This chain is Phospholipid-transporting ATPase IF (ATP11B), found in Homo sapiens (Human).